The chain runs to 163 residues: Phosphopantetheine adenylyltransferase (163 aa).

Residue T10 coordinates substrate. Residues 10-11 (TF) and H18 contribute to the ATP site. Residues K42, L74, and R88 each contribute to the substrate site. Residues 89–91 (GLR), E99, and 124–130 (NSFISST) contribute to the ATP site.

It belongs to the bacterial CoaD family. In terms of assembly, homohexamer. It depends on Mg(2+) as a cofactor.

It localises to the cytoplasm. It catalyses the reaction (R)-4'-phosphopantetheine + ATP + H(+) = 3'-dephospho-CoA + diphosphate. The protein operates within cofactor biosynthesis; coenzyme A biosynthesis; CoA from (R)-pantothenate: step 4/5. In terms of biological role, reversibly transfers an adenylyl group from ATP to 4'-phosphopantetheine, yielding dephospho-CoA (dPCoA) and pyrophosphate. The protein is Phosphopantetheine adenylyltransferase of Shewanella sp. (strain W3-18-1).